Consider the following 228-residue polypeptide: Lipoprotein-releasing system ATP-binding protein LolD 2 (228 aa).

One can recognise an ABC transporter domain in the interval 9–228 (RGLERVYKTE…KDGHLELQRV (220 aa)). 42–49 (GPSGSGKS) is an ATP binding site.

Belongs to the ABC transporter superfamily. Lipoprotein translocase (TC 3.A.1.125) family. The complex is composed of two ATP-binding proteins (LolD) and two transmembrane proteins (LolC and LolE).

Its subcellular location is the cell inner membrane. Functionally, part of the ABC transporter complex LolCDE involved in the translocation of mature outer membrane-directed lipoproteins, from the inner membrane to the periplasmic chaperone, LolA. Responsible for the formation of the LolA-lipoprotein complex in an ATP-dependent manner. In Caulobacter vibrioides (strain ATCC 19089 / CIP 103742 / CB 15) (Caulobacter crescentus), this protein is Lipoprotein-releasing system ATP-binding protein LolD 2.